Consider the following 36-residue polypeptide: Beta/delta/mu-theraphotoxin-Pv1 (36 aa).

3 cysteine pairs are disulfide-bonded: Cys-3–Cys-17, Cys-10–Cys-22, and Cys-16–Cys-30. Phe-36 carries the post-translational modification Phenylalanine amide.

Belongs to the neurotoxin 10 (Hwtx-1) family. Expressed by the venom gland.

Its subcellular location is the secreted. Gating-modifier toxin that targets voltage-gated sodium channels. Inhibits the inactivation of Nav1.7/SCN9A. This chain is Beta/delta/mu-theraphotoxin-Pv1, found in Poecilotheria vittata (Ghost ornamental tarantula).